The sequence spans 262 residues: Phosphatidylserine decarboxylase proenzyme (262 aa).

Residues aspartate 86, histidine 142, and serine 226 each act as charge relay system; for autoendoproteolytic cleavage activity in the active site. The active-site Schiff-base intermediate with substrate; via pyruvic acid; for decarboxylase activity is the serine 226. Serine 226 carries the pyruvic acid (Ser); by autocatalysis modification.

It belongs to the phosphatidylserine decarboxylase family. PSD-B subfamily. Prokaryotic type I sub-subfamily. Heterodimer of a large membrane-associated beta subunit and a small pyruvoyl-containing alpha subunit. Pyruvate serves as cofactor. In terms of processing, is synthesized initially as an inactive proenzyme. Formation of the active enzyme involves a self-maturation process in which the active site pyruvoyl group is generated from an internal serine residue via an autocatalytic post-translational modification. Two non-identical subunits are generated from the proenzyme in this reaction, and the pyruvate is formed at the N-terminus of the alpha chain, which is derived from the carboxyl end of the proenzyme. The autoendoproteolytic cleavage occurs by a canonical serine protease mechanism, in which the side chain hydroxyl group of the serine supplies its oxygen atom to form the C-terminus of the beta chain, while the remainder of the serine residue undergoes an oxidative deamination to produce ammonia and the pyruvoyl prosthetic group on the alpha chain. During this reaction, the Ser that is part of the protease active site of the proenzyme becomes the pyruvoyl prosthetic group, which constitutes an essential element of the active site of the mature decarboxylase.

It localises to the cell membrane. It catalyses the reaction a 1,2-diacyl-sn-glycero-3-phospho-L-serine + H(+) = a 1,2-diacyl-sn-glycero-3-phosphoethanolamine + CO2. The protein operates within phospholipid metabolism; phosphatidylethanolamine biosynthesis; phosphatidylethanolamine from CDP-diacylglycerol: step 2/2. Functionally, catalyzes the formation of phosphatidylethanolamine (PtdEtn) from phosphatidylserine (PtdSer). The polypeptide is Phosphatidylserine decarboxylase proenzyme (Bacillus mycoides (strain KBAB4) (Bacillus weihenstephanensis)).